We begin with the raw amino-acid sequence, 872 residues long: Bifunctional uridylyltransferase/uridylyl-removing enzyme (872 aa).

A uridylyltransferase region spans residues 1 to 332; that stretch reads MALPNKVKKL…PKHHQPIIQE (332 aa). The uridylyl-removing stretch occupies residues 333-691; sequence LDRNFERIGN…VSNKAMHGGT (359 aa). In terms of domain architecture, HD spans 450–572; sequence VDEHTHRLIN…VKTERQLDYL (123 aa). ACT domains lie at 692-773 and 799-872; these read QVFV…FKKN and LIEI…AETE.

This sequence belongs to the GlnD family. Mg(2+) is required as a cofactor.

The enzyme catalyses [protein-PII]-L-tyrosine + UTP = [protein-PII]-uridylyl-L-tyrosine + diphosphate. It carries out the reaction [protein-PII]-uridylyl-L-tyrosine + H2O = [protein-PII]-L-tyrosine + UMP + H(+). With respect to regulation, uridylyltransferase (UTase) activity is inhibited by glutamine, while glutamine activates uridylyl-removing (UR) activity. Functionally, modifies, by uridylylation and deuridylylation, the PII regulatory proteins (GlnB and homologs), in response to the nitrogen status of the cell that GlnD senses through the glutamine level. Under low glutamine levels, catalyzes the conversion of the PII proteins and UTP to PII-UMP and PPi, while under higher glutamine levels, GlnD hydrolyzes PII-UMP to PII and UMP (deuridylylation). Thus, controls uridylylation state and activity of the PII proteins, and plays an important role in the regulation of nitrogen assimilation and metabolism. The polypeptide is Bifunctional uridylyltransferase/uridylyl-removing enzyme (Pseudoalteromonas translucida (strain TAC 125)).